Reading from the N-terminus, the 198-residue chain is Nucleoid occlusion factor SlmA (198 aa).

The HTH tetR-type domain maps to 10–70 (NRREEILQSL…SLIEFIEDSL (61 aa)). Positions 33–52 (TTAKLAASVGVSEAALYRHF) form a DNA-binding region, H-T-H motif. A coiled-coil region spans residues 117–144 (EQDRLQGRINQLFERIEAQLRQVLREKR).

Belongs to the nucleoid occlusion factor SlmA family. Homodimer. Interacts with FtsZ.

Its subcellular location is the cytoplasm. The protein localises to the nucleoid. Functionally, required for nucleoid occlusion (NO) phenomenon, which prevents Z-ring formation and cell division over the nucleoid. Acts as a DNA-associated cell division inhibitor that binds simultaneously chromosomal DNA and FtsZ, and disrupts the assembly of FtsZ polymers. SlmA-DNA-binding sequences (SBS) are dispersed on non-Ter regions of the chromosome, preventing FtsZ polymerization at these regions. In Citrobacter koseri (strain ATCC BAA-895 / CDC 4225-83 / SGSC4696), this protein is Nucleoid occlusion factor SlmA.